A 72-amino-acid chain; its full sequence is MSKVCILTGKRPTYGNNVSHANNRTRKRFEPNLHTKRIWVEEEKRWVKVRVSAKAMKIMSKTGTAELAKLIR.

It belongs to the bacterial ribosomal protein bL28 family.

The protein is Large ribosomal subunit protein bL28 of Chlorobium phaeobacteroides (strain BS1).